We begin with the raw amino-acid sequence, 520 residues long: Cytochrome P450 monooxygenase oblB (520 aa).

3 helical membrane-spanning segments follow: residues 17–37, 229–249, and 320–340; these read VAVISAGAFYLLNLVIYRLFL, LFMGLPWLIHVVRLIPVSILA, and IGTGTITTAGSLCFICYHIVV. Cys-462 serves as a coordination point for heme.

It belongs to the cytochrome P450 family. Requires heme as cofactor.

The protein resides in the membrane. It participates in secondary metabolite biosynthesis; terpenoid biosynthesis. Functionally, cytochrome P450 monooxygenase; part of the gene cluster that mediates the biosynthesis of the sesterterpenes ophiobolins, fungal phytotoxins with potential anti-cancer activities. The first step of the pathway is performed by the sesterterpene synthase oblA that possesses both prenyl transferase and terpene cyclase activity, converting isopentenyl diphosphate and dimethylallyl diphosphate into geranylfarnesyl diphosphate (GFPP) and further converting GFPP into ophiobolin F, respectively. Other sesterterpenoids (C(25) terpenoids) are found as minor products of oblA. It is expected that ophiobolin F is then oxidized to ophiobolin A via ophiobolin C and ophiobolin B intermediates by the combined action of the cytochrome P450 monooxygenase oblB and the FAD-dependent oxidoreductase oblC. Although oblB catalyzes multistep oxygenations at C5 and C21/C7 in a relatively efficient manner, it is unable to convert ophiobolin F to ophiobolin C and produces instead several unexpected derivatives. This is Cytochrome P450 monooxygenase oblB from Aspergillus clavatus (strain ATCC 1007 / CBS 513.65 / DSM 816 / NCTC 3887 / NRRL 1 / QM 1276 / 107).